A 440-amino-acid chain; its full sequence is ATP-dependent protease ATPase subunit HslU (440 aa).

ATP is bound by residues Ile-18 and 60 to 65 (GVGKTE). Positions 138–159 (RAQSFDQEDPSAGTRQKLRKKL) are disordered. Residues Asp-252, Glu-318, and Arg-390 each contribute to the ATP site.

Belongs to the ClpX chaperone family. HslU subfamily. In terms of assembly, a double ring-shaped homohexamer of HslV is capped on each side by a ring-shaped HslU homohexamer. The assembly of the HslU/HslV complex is dependent on binding of ATP.

The protein localises to the cytoplasm. Functionally, ATPase subunit of a proteasome-like degradation complex; this subunit has chaperone activity. The binding of ATP and its subsequent hydrolysis by HslU are essential for unfolding of protein substrates subsequently hydrolyzed by HslV. HslU recognizes the N-terminal part of its protein substrates and unfolds these before they are guided to HslV for hydrolysis. The chain is ATP-dependent protease ATPase subunit HslU from Alkalilimnicola ehrlichii (strain ATCC BAA-1101 / DSM 17681 / MLHE-1).